Reading from the N-terminus, the 546-residue chain is uncharacterized protein (546 aa).

Helical transmembrane passes span 27 to 46, 59 to 78, 83 to 100, 114 to 134, 143 to 163, 176 to 196, 204 to 224, 237 to 257, and 268 to 288; these read EALV…PFVF, NGLI…ALVT, FALI…YAIL, SVLF…AYAA, PLII…IPIF, MLYS…ALGI, VIAV…VFTA, LSSA…FGVF, and MIWI…LIGW.

It is found in the cell membrane. This is an uncharacterized protein from Bacillus subtilis (strain 168).